Reading from the N-terminus, the 316-residue chain is Pantothenate kinase (316 aa).

95-102 (GSVAVGKS) contributes to the ATP binding site.

The protein belongs to the prokaryotic pantothenate kinase family.

The protein localises to the cytoplasm. It carries out the reaction (R)-pantothenate + ATP = (R)-4'-phosphopantothenate + ADP + H(+). Its pathway is cofactor biosynthesis; coenzyme A biosynthesis; CoA from (R)-pantothenate: step 1/5. This is Pantothenate kinase from Yersinia enterocolitica serotype O:8 / biotype 1B (strain NCTC 13174 / 8081).